Here is a 124-residue protein sequence, read N- to C-terminus: Acidic phospholipase A2 BA2 (124 aa).

7 disulfide bridges follow: Cys-26-Cys-116, Cys-28-Cys-44, Cys-43-Cys-95, Cys-49-Cys-124, Cys-50-Cys-88, Cys-57-Cys-81, and Cys-75-Cys-86. Ca(2+)-binding residues include Tyr-27, Gly-29, and Gly-31. His-47 is an active-site residue. Ca(2+) is bound at residue Asp-48. Asp-89 is an active-site residue.

Belongs to the phospholipase A2 family. Group II subfamily. D49 sub-subfamily. It depends on Ca(2+) as a cofactor. In terms of tissue distribution, expressed by the venom gland.

The protein resides in the secreted. The catalysed reaction is a 1,2-diacyl-sn-glycero-3-phosphocholine + H2O = a 1-acyl-sn-glycero-3-phosphocholine + a fatty acid + H(+). In terms of biological role, PLA2 catalyzes the calcium-dependent hydrolysis of the 2-acyl groups in 3-sn-phosphoglycerides. The sequence is that of Acidic phospholipase A2 BA2 from Gloydius halys (Chinese water mocassin).